Consider the following 299-residue polypeptide: Coenzyme PQQ synthesis protein B (299 aa).

This sequence belongs to the PqqB family.

The protein operates within cofactor biosynthesis; pyrroloquinoline quinone biosynthesis. Its function is as follows. May be involved in the transport of PQQ or its precursor to the periplasm. The protein is Coenzyme PQQ synthesis protein B of Xanthomonas axonopodis pv. citri (strain 306).